The sequence spans 258 residues: Proliferating cell nuclear antigen (258 aa).

Residues 61–80 (NCDRSLSLGLSLVSLSKILK) mediate DNA binding.

This sequence belongs to the PCNA family. In terms of assembly, homotrimer. Forms a complex with activator 1 heteropentamer in the presence of ATP.

Its subcellular location is the nucleus. In terms of biological role, this protein is an auxiliary protein of DNA polymerase delta and is involved in the control of eukaryotic DNA replication by increasing the polymerase's processibility during elongation of the leading strand. The sequence is that of Proliferating cell nuclear antigen (pcna) from Dictyostelium discoideum (Social amoeba).